The chain runs to 290 residues: Membrane protein insertase YidC (290 aa).

The N-terminal stretch at methionine 1–glycine 19 is a signal peptide. Cysteine 20 carries N-palmitoyl cysteine lipidation. Cysteine 20 carries the S-diacylglycerol cysteine lipid modification. 5 helical membrane-spanning segments follow: residues tyrosine 56–leucine 76, methionine 134–leucine 154, proline 176–serine 196, glycine 207–serine 224, and leucine 229–tyrosine 251. Positions histidine 270–lysine 290 are disordered.

It belongs to the OXA1/ALB3/YidC family. Type 2 subfamily.

The protein resides in the cell membrane. In terms of biological role, required for the insertion and/or proper folding and/or complex formation of integral membrane proteins into the membrane. Involved in integration of membrane proteins that insert both dependently and independently of the Sec translocase complex, as well as at least some lipoproteins. In Staphylococcus aureus (strain Mu3 / ATCC 700698), this protein is Membrane protein insertase YidC.